A 97-amino-acid polypeptide reads, in one-letter code: Intermembrane phospholipid transport system binding protein MlaB (97 aa).

The 97-residue stretch at Met1–Arg97 folds into the STAS domain.

In terms of assembly, the complex is composed of two ATP-binding proteins (MlaF), two transmembrane proteins (MlaE), two cytoplasmic solute-binding proteins (MlaB) and six periplasmic solute-binding proteins (MlaD).

It localises to the cytoplasm. In terms of biological role, part of the ABC transporter complex MlaFEDB, which is involved in a phospholipid transport pathway that maintains lipid asymmetry in the outer membrane by retrograde trafficking of phospholipids from the outer membrane to the inner membrane. MlaB plays critical roles in both the assembly and activity of the complex. May act by modulating MlaF structure and stability. The protein is Intermembrane phospholipid transport system binding protein MlaB of Escherichia coli (strain K12).